A 919-amino-acid polypeptide reads, in one-letter code: DNA-directed RNA polymerase 132 kDa polypeptide (919 aa).

This sequence belongs to the RNA polymerase beta chain family. In terms of assembly, the DNA-dependent RNA polymerase used for intermediate and late genes expression consists of eight subunits (147) kDa, (133) kDa, (35) kDa, (30) kDa, (22) kDa, (19) kDa, (18) kDa and (7) kDa totalling more than 500 kDa in mass. The same holoenzyme, with the addition of the transcription-specificity factor RAP94, is used for early gene expression.

It localises to the virion. The enzyme catalyses RNA(n) + a ribonucleoside 5'-triphosphate = RNA(n+1) + diphosphate. Part of the DNA-dependent RNA polymerase which catalyzes the transcription of viral DNA into RNA using the four ribonucleoside triphosphates as substrates. Responsible for the transcription of early, intermediate and late genes. DNA-dependent RNA polymerase associates with the early transcription factor (ETF), itself composed of D6 and A7, thereby allowing the early genes transcription. Late transcription, and probably also intermediate transcription, require newly synthesized RNA polymerase. This Sheeppox virus (strain KS-1) (SPPV) protein is DNA-directed RNA polymerase 132 kDa polypeptide (RPO132).